A 129-amino-acid chain; its full sequence is Small ribosomal subunit protein uS11 (129 aa).

The protein belongs to the universal ribosomal protein uS11 family. In terms of assembly, part of the 30S ribosomal subunit. Interacts with proteins S7 and S18. Binds to IF-3.

Functionally, located on the platform of the 30S subunit, it bridges several disparate RNA helices of the 16S rRNA. Forms part of the Shine-Dalgarno cleft in the 70S ribosome. The sequence is that of Small ribosomal subunit protein uS11 from Ectopseudomonas mendocina (strain ymp) (Pseudomonas mendocina).